The following is a 330-amino-acid chain: RNA polymerase sigma factor RpoS (330 aa).

Residues 56 to 89 (DATQLYLGEIGYSPLLTAEEEVYFARRALRGDVA) are sigma-70 factor domain-1. Residues 94–164 (MIESNLRLVV…ERAIMNQTRT (71 aa)) are sigma-70 factor domain-2. The Interaction with polymerase core subunit RpoC motif lies at 118-121 (DLIE). The interval 174–249 (ELNVYLRTAR…DEKENGPEDT (76 aa)) is sigma-70 factor domain-3. A sigma-70 factor domain-4 region spans residues 262 to 315 (WLFELNAKQREVLARRFGLLGYEAATLEDVGREIGLTRERVRQIQVEGLRRLRE). A DNA-binding region (H-T-H motif) is located at residues 288–307 (LEDVGREIGLTRERVRQIQV).

It belongs to the sigma-70 factor family. RpoS subfamily. Interacts with the RNA polymerase core enzyme.

The protein localises to the cytoplasm. In terms of biological role, sigma factors are initiation factors that promote the attachment of RNA polymerase to specific initiation sites and are then released. This sigma factor is the master transcriptional regulator of the stationary phase and the general stress response. This chain is RNA polymerase sigma factor RpoS, found in Shigella flexneri.